The following is an 81-amino-acid chain: Protein PYP1 (81 aa).

The N-terminal 25 residues, 1–25 (MAFVSGFTGMPVTARVSKAVCRTRM), are a transit peptide targeting the chloroplast. Residues 27–57 (LEGGKSSGGGEATRDPEPTAVDPNDPKGKQQ) are disordered.

Its subcellular location is the plastid. It is found in the chloroplast. This is Protein PYP1 from Pyropia yezoensis (Susabi-nori).